The following is a 323-amino-acid chain: Lipoyl synthase (323 aa).

The [4Fe-4S] cluster site is built by C61, C66, C72, C87, C91, C94, and S300. The 217-residue stretch at 73-289 (WDKKHATFMI…ETVAYSKGFL (217 aa)) folds into the Radical SAM core domain.

This sequence belongs to the radical SAM superfamily. Lipoyl synthase family. Requires [4Fe-4S] cluster as cofactor.

The protein localises to the cytoplasm. The catalysed reaction is [[Fe-S] cluster scaffold protein carrying a second [4Fe-4S](2+) cluster] + N(6)-octanoyl-L-lysyl-[protein] + 2 oxidized [2Fe-2S]-[ferredoxin] + 2 S-adenosyl-L-methionine + 4 H(+) = [[Fe-S] cluster scaffold protein] + N(6)-[(R)-dihydrolipoyl]-L-lysyl-[protein] + 4 Fe(3+) + 2 hydrogen sulfide + 2 5'-deoxyadenosine + 2 L-methionine + 2 reduced [2Fe-2S]-[ferredoxin]. It functions in the pathway protein modification; protein lipoylation via endogenous pathway; protein N(6)-(lipoyl)lysine from octanoyl-[acyl-carrier-protein]: step 2/2. Catalyzes the radical-mediated insertion of two sulfur atoms into the C-6 and C-8 positions of the octanoyl moiety bound to the lipoyl domains of lipoate-dependent enzymes, thereby converting the octanoylated domains into lipoylated derivatives. In Rhizobium leguminosarum bv. trifolii (strain WSM2304), this protein is Lipoyl synthase.